The primary structure comprises 182 residues: tRNA-splicing endonuclease (182 aa).

Residues Tyr-119, His-127, and Lys-158 contribute to the active site.

Belongs to the tRNA-intron endonuclease family. Archaeal short subfamily. In terms of assembly, homotetramer; although the tetramer contains four active sites, only two participate in the cleavage. Therefore, it should be considered as a dimer of dimers.

The enzyme catalyses pretRNA = a 3'-half-tRNA molecule with a 5'-OH end + a 5'-half-tRNA molecule with a 2',3'-cyclic phosphate end + an intron with a 2',3'-cyclic phosphate and a 5'-hydroxyl terminus.. Its function is as follows. Endonuclease that removes tRNA introns. Cleaves pre-tRNA at the 5'- and 3'-splice sites to release the intron. The products are an intron and two tRNA half-molecules bearing 2',3' cyclic phosphate and 5'-OH termini. Recognizes a pseudosymmetric substrate in which 2 bulged loops of 3 bases are separated by a stem of 4 bp. This Saccharolobus islandicus (strain M.14.25 / Kamchatka #1) (Sulfolobus islandicus) protein is tRNA-splicing endonuclease.